The chain runs to 100 residues: Protein Tat (100 aa).

Residues 1 to 20 (MEPVNPSLEPWKHPGSQPKT) are disordered. Positions 1–24 (MEPVNPSLEPWKHPGSQPKTACTN) are interaction with human CREBBP. Positions 1-48 (MEPVNPSLEPWKHPGSQPKTACTNCYCKKCCFHCQACFITKGLGISYG) are transactivation. Zn(2+) is bound by residues Cys-22, Cys-25, and Cys-27. The interval 22–37 (CTNCYCKKCCFHCQAC) is cysteine-rich. At Lys-28 the chain carries N6-acetyllysine; by host PCAF. Residues Cys-30, His-33, Cys-34, and Cys-37 each coordinate Zn(2+). Residues 38–48 (FITKGLGISYG) are core. Positions 47–100 (YGRKKRRQRRRPPQDSQTHQVSLSKPSSQPRGDPTGPKEQKKKVERETETDPVH) are disordered. Residues 48-57 (GRKKRRQRRR) are compositionally biased toward basic residues. The short motif at 49 to 57 (RKKRRQRRR) is the Nuclear localization signal, RNA-binding (TAR), and protein transduction element. Residues 49-85 (RKKRRQRRRPPQDSQTHQVSLSKPSSQPRGDPTGPKE) are interaction with the host capping enzyme RNGTT. Residues Lys-50 and Lys-51 each carry the N6-acetyllysine; by host EP300 and GCN5L2 modification. Arg-52 and Arg-53 each carry asymmetric dimethylarginine; by host PRMT6. The span at 61-76 (DSQTHQVSLSKPSSQP) shows a compositional bias: polar residues. Lys-71 is covalently cross-linked (Glycyl lysine isopeptide (Lys-Gly) (interchain with G-Cter in ubiquitin)). The short motif at 77 to 79 (RGD) is the Cell attachment site element. Residues 82-100 (GPKEQKKKVERETETDPVH) show a composition bias toward basic and acidic residues.

It belongs to the lentiviruses Tat family. As to quaternary structure, interacts with host CCNT1. Associates with the P-TEFb complex composed at least of Tat, P-TEFb (CDK9 and CCNT1), TAR RNA, RNA Pol II. Recruits the HATs CREBBP, TAF1/TFIID, EP300, PCAF and GCN5L2. Interacts with host KAT5/Tip60; this interaction targets the latter to degradation. Interacts with the host deacetylase SIRT1. Interacts with host capping enzyme RNGTT; this interaction stimulates RNGTT. Binds to host KDR, and to the host integrins ITGAV/ITGB3 and ITGA5/ITGB1. Interacts with host KPNB1/importin beta-1 without previous binding to KPNA1/importin alpha-1. Interacts with EIF2AK2. Interacts with host nucleosome assembly protein NAP1L1; this interaction may be required for the transport of Tat within the nucleus, since the two proteins interact at the nuclear rim. Interacts with host C1QBP/SF2P32; this interaction involves lysine-acetylated Tat. Interacts with the host chemokine receptors CCR2, CCR3 and CXCR4. Interacts with host DPP4/CD26; this interaction may trigger an anti-proliferative effect. Interacts with host LDLR. Interacts with the host extracellular matrix metalloproteinase MMP1. Interacts with host PRMT6; this interaction mediates Tat's methylation. Interacts with, and is ubiquitinated by MDM2/Hdm2. Interacts with host PSMC3 and HTATIP2. Interacts with STAB1; this interaction may overcome SATB1-mediated repression of IL2 and IL2RA (interleukin) in T cells by binding to the same domain than HDAC1. Interacts (when acetylated) with human CDK13, thereby increasing HIV-1 mRNA splicing and promoting the production of the doubly spliced HIV-1 protein Nef. Interacts with host TBP; this interaction modulates the activity of transcriptional pre-initiation complex. Interacts with host RELA. Interacts with host PLSCR1; this interaction negatively regulates Tat transactivation activity by altering its subcellular distribution. Post-translationally, asymmetrical arginine methylation by host PRMT6 seems to diminish the transactivation capacity of Tat and affects the interaction with host CCNT1. Acetylation by EP300, CREBBP, GCN5L2/GCN5 and PCAF regulates the transactivation activity of Tat. EP300-mediated acetylation of Lys-50 promotes dissociation of Tat from the TAR RNA through the competitive binding to PCAF's bromodomain. In addition, the non-acetylated Tat's N-terminus can also interact with PCAF. PCAF-mediated acetylation of Lys-28 enhances Tat's binding to CCNT1. Lys-50 is deacetylated by SIRT1. In terms of processing, polyubiquitination by host MDM2 does not target Tat to degradation, but activates its transactivation function and fosters interaction with CCNT1 and TAR RNA. Post-translationally, phosphorylated by EIF2AK2 on serine and threonine residues adjacent to the basic region important for TAR RNA binding and function. Phosphorylation of Tat by EIF2AK2 is dependent on the prior activation of EIF2AK2 by dsRNA.

It is found in the host nucleus. Its subcellular location is the host nucleolus. The protein localises to the host cytoplasm. The protein resides in the secreted. Functionally, transcriptional activator that increases RNA Pol II processivity, thereby increasing the level of full-length viral transcripts. Recognizes a hairpin structure at the 5'-LTR of the nascent viral mRNAs referred to as the transactivation responsive RNA element (TAR) and recruits the cyclin T1-CDK9 complex (P-TEFb complex) that will in turn hyperphosphorylate the RNA polymerase II to allow efficient elongation. The CDK9 component of P-TEFb and other Tat-activated kinases hyperphosphorylate the C-terminus of RNA Pol II that becomes stabilized and much more processive. Other factors such as HTATSF1/Tat-SF1, SUPT5H/SPT5, and HTATIP2 are also important for Tat's function. Besides its effect on RNA Pol II processivity, Tat induces chromatin remodeling of proviral genes by recruiting the histone acetyltransferases (HATs) CREBBP, EP300 and PCAF to the chromatin. This also contributes to the increase in proviral transcription rate, especially when the provirus integrates in transcriptionally silent region of the host genome. To ensure maximal activation of the LTR, Tat mediates nuclear translocation of NF-kappa-B by interacting with host RELA. Through its interaction with host TBP, Tat may also modulate transcription initiation. Tat can reactivate a latently infected cell by penetrating in it and transactivating its LTR promoter. In the cytoplasm, Tat is thought to act as a translational activator of HIV-1 mRNAs. Its function is as follows. Extracellular circulating Tat can be endocytosed by surrounding uninfected cells via the binding to several surface receptors such as CD26, CXCR4, heparan sulfate proteoglycans (HSPG) or LDLR. Neurons are rarely infected, but they internalize Tat via their LDLR. Through its interaction with nuclear HATs, Tat is potentially able to control the acetylation-dependent cellular gene expression. Modulates the expression of many cellular genes involved in cell survival, proliferation or in coding for cytokines or cytokine receptors. Tat plays a role in T-cell and neurons apoptosis. Tat induced neurotoxicity and apoptosis probably contribute to neuroAIDS. Circulating Tat also acts as a chemokine-like and/or growth factor-like molecule that binds to specific receptors on the surface of the cells, affecting many cellular pathways. In the vascular system, Tat binds to ITGAV/ITGB3 and ITGA5/ITGB1 integrins dimers at the surface of endothelial cells and competes with bFGF for heparin-binding sites, leading to an excess of soluble bFGF. In Homo sapiens (Human), this protein is Protein Tat.